The chain runs to 95 residues: DNA-directed RNA polymerase subunit Rpo11 (95 aa).

Belongs to the archaeal Rpo11/eukaryotic RPB11/RPC19 RNA polymerase subunit family. In terms of assembly, part of the RNA polymerase complex.

It localises to the cytoplasm. The enzyme catalyses RNA(n) + a ribonucleoside 5'-triphosphate = RNA(n+1) + diphosphate. In terms of biological role, DNA-dependent RNA polymerase (RNAP) catalyzes the transcription of DNA into RNA using the four ribonucleoside triphosphates as substrates. In Methanococcus vannielii (strain ATCC 35089 / DSM 1224 / JCM 13029 / OCM 148 / SB), this protein is DNA-directed RNA polymerase subunit Rpo11.